The following is a 381-amino-acid chain: Cytochrome b (381 aa).

Transmembrane regions (helical) follow at residues 34 to 54, 78 to 99, 114 to 134, and 179 to 199; these read FGSL…FLAM, WLIR…YLHI, WNIG…GYVL, and FFAF…IHLL. Residues histidine 84 and histidine 98 each coordinate heme b. Heme b-binding residues include histidine 183 and histidine 197. Histidine 202 contacts a ubiquinone. Helical transmembrane passes span 227–247, 289–309, 321–341, and 348–368; these read YKDL…ALFM, LGGV…PLLH, MTQI…WIGG, and FMMV…IIMP.

It belongs to the cytochrome b family. In terms of assembly, the cytochrome bc1 complex contains 3 respiratory subunits (MT-CYB, CYC1 and UQCRFS1), 2 core proteins (UQCRC1 and UQCRC2) and probably 6 low-molecular weight proteins. Requires heme b as cofactor.

It is found in the mitochondrion inner membrane. In terms of biological role, component of the ubiquinol-cytochrome c reductase complex (complex III or cytochrome b-c1 complex) that is part of the mitochondrial respiratory chain. The b-c1 complex mediates electron transfer from ubiquinol to cytochrome c. Contributes to the generation of a proton gradient across the mitochondrial membrane that is then used for ATP synthesis. This Prionace glauca (Blue shark) protein is Cytochrome b (mt-cyb).